A 213-amino-acid polypeptide reads, in one-letter code: ATP synthase subunit b 2 (213 aa).

Positions 1–45 (MFVTEAYAQSAPTVGETHTETPAVGQPQPEATHTETGVAHGAEHG) are disordered. The helical transmembrane segment at 57-76 (TYASQVLWLAITFGLFYLLM) threads the bilayer.

The protein belongs to the ATPase B chain family. As to quaternary structure, F-type ATPases have 2 components, F(1) - the catalytic core - and F(0) - the membrane proton channel. F(1) has five subunits: alpha(3), beta(3), gamma(1), delta(1), epsilon(1). F(0) has three main subunits: a(1), b(2) and c(10-14). The alpha and beta chains form an alternating ring which encloses part of the gamma chain. F(1) is attached to F(0) by a central stalk formed by the gamma and epsilon chains, while a peripheral stalk is formed by the delta and b chains.

The protein resides in the cell inner membrane. In terms of biological role, f(1)F(0) ATP synthase produces ATP from ADP in the presence of a proton or sodium gradient. F-type ATPases consist of two structural domains, F(1) containing the extramembraneous catalytic core and F(0) containing the membrane proton channel, linked together by a central stalk and a peripheral stalk. During catalysis, ATP synthesis in the catalytic domain of F(1) is coupled via a rotary mechanism of the central stalk subunits to proton translocation. Functionally, component of the F(0) channel, it forms part of the peripheral stalk, linking F(1) to F(0). The b'-subunit is a diverged and duplicated form of b found in plants and photosynthetic bacteria. In Agrobacterium fabrum (strain C58 / ATCC 33970) (Agrobacterium tumefaciens (strain C58)), this protein is ATP synthase subunit b 2 (atpF2).